Reading from the N-terminus, the 814-residue chain is Immunoglobulin superfamily DCC subclass member 3 (814 aa).

The first 35 residues, 1 to 35 (MAVQRAASPRRPPAPLWPRLLLPLLLLLLPAPSEG), serve as a signal peptide directing secretion. 4 consecutive Ig-like C2-type domains span residues 36-139 (LGHS…ATMS), 140-220 (DFHV…IRIS), 238-321 (PAIL…RTAQ), and 329-416 (PAEF…ARLT). Cystine bridges form between C63/C117 and C160/C209. N93 carries N-linked (GlcNAc...) asparagine glycosylation. The N-linked (GlcNAc...) asparagine glycan is linked to N246. 2 cysteine pairs are disulfide-bonded: C259–C307 and C351–C400. Residues N381 and N382 are each glycosylated (N-linked (GlcNAc...) asparagine). Fibronectin type-III domains follow at residues 426-520 (PPRN…TLGE) and 523-618 (APPP…ASER). N-linked (GlcNAc...) asparagine glycans are attached at residues N580, N604, and N634. Residues 641-661 (IVIGIHIGVTCIIFCVLFLLF) form a helical membrane-spanning segment. 2 disordered regions span residues 722–743 (PPAS…APAP) and 762–814 (GKTT…HSEQ). Residues 770–781 (TEATAPCAGLAA) show a composition bias toward low complexity.

This sequence belongs to the immunoglobulin superfamily. DCC family.

It is found in the membrane. This is Immunoglobulin superfamily DCC subclass member 3 (IGDCC3) from Homo sapiens (Human).